A 439-amino-acid polypeptide reads, in one-letter code: ATP-dependent protease ATPase subunit HslU (439 aa).

Residues Ile-17, 59 to 64, Asp-251, Glu-317, and Arg-389 each bind ATP; that span reads GVGKTE.

Belongs to the ClpX chaperone family. HslU subfamily. In terms of assembly, a double ring-shaped homohexamer of HslV is capped on each side by a ring-shaped HslU homohexamer. The assembly of the HslU/HslV complex is dependent on binding of ATP.

It localises to the cytoplasm. Functionally, ATPase subunit of a proteasome-like degradation complex; this subunit has chaperone activity. The binding of ATP and its subsequent hydrolysis by HslU are essential for unfolding of protein substrates subsequently hydrolyzed by HslV. HslU recognizes the N-terminal part of its protein substrates and unfolds these before they are guided to HslV for hydrolysis. In Campylobacter jejuni subsp. doylei (strain ATCC BAA-1458 / RM4099 / 269.97), this protein is ATP-dependent protease ATPase subunit HslU.